A 189-amino-acid chain; its full sequence is Probable nicotinate-nucleotide adenylyltransferase (189 aa).

The protein belongs to the NadD family.

The catalysed reaction is nicotinate beta-D-ribonucleotide + ATP + H(+) = deamido-NAD(+) + diphosphate. The protein operates within cofactor biosynthesis; NAD(+) biosynthesis; deamido-NAD(+) from nicotinate D-ribonucleotide: step 1/1. In terms of biological role, catalyzes the reversible adenylation of nicotinate mononucleotide (NaMN) to nicotinic acid adenine dinucleotide (NaAD). This is Probable nicotinate-nucleotide adenylyltransferase from Bacillus cereus (strain B4264).